The chain runs to 150 residues: D-aminoacyl-tRNA deacylase (150 aa).

The Gly-cisPro motif, important for rejection of L-amino acids motif lies at 140–141; that stretch reads GP.

The protein belongs to the DTD family. In terms of assembly, homodimer.

The protein resides in the cytoplasm. The catalysed reaction is glycyl-tRNA(Ala) + H2O = tRNA(Ala) + glycine + H(+). It carries out the reaction a D-aminoacyl-tRNA + H2O = a tRNA + a D-alpha-amino acid + H(+). Functionally, an aminoacyl-tRNA editing enzyme that deacylates mischarged D-aminoacyl-tRNAs. Also deacylates mischarged glycyl-tRNA(Ala), protecting cells against glycine mischarging by AlaRS. Acts via tRNA-based rather than protein-based catalysis; rejects L-amino acids rather than detecting D-amino acids in the active site. By recycling D-aminoacyl-tRNA to D-amino acids and free tRNA molecules, this enzyme counteracts the toxicity associated with the formation of D-aminoacyl-tRNA entities in vivo and helps enforce protein L-homochirality. This Kluyveromyces lactis (strain ATCC 8585 / CBS 2359 / DSM 70799 / NBRC 1267 / NRRL Y-1140 / WM37) (Yeast) protein is D-aminoacyl-tRNA deacylase (DTD1).